A 166-amino-acid chain; its full sequence is NAD(P)H-quinone oxidoreductase subunit I, chloroplastic (166 aa).

4Fe-4S ferredoxin-type domains are found at residues 55–84 (GRIH…VDWK) and 95–124 (LNYS…MTEE). The [4Fe-4S] cluster site is built by cysteine 64, cysteine 67, cysteine 70, cysteine 74, cysteine 104, cysteine 107, cysteine 110, and cysteine 114.

This sequence belongs to the complex I 23 kDa subunit family. As to quaternary structure, NDH is composed of at least 16 different subunits, 5 of which are encoded in the nucleus. [4Fe-4S] cluster is required as a cofactor.

It is found in the plastid. Its subcellular location is the chloroplast thylakoid membrane. It carries out the reaction a plastoquinone + NADH + (n+1) H(+)(in) = a plastoquinol + NAD(+) + n H(+)(out). The enzyme catalyses a plastoquinone + NADPH + (n+1) H(+)(in) = a plastoquinol + NADP(+) + n H(+)(out). Its function is as follows. NDH shuttles electrons from NAD(P)H:plastoquinone, via FMN and iron-sulfur (Fe-S) centers, to quinones in the photosynthetic chain and possibly in a chloroplast respiratory chain. The immediate electron acceptor for the enzyme in this species is believed to be plastoquinone. Couples the redox reaction to proton translocation, and thus conserves the redox energy in a proton gradient. In Polymnia canadensis (White-flowered leaf-cup), this protein is NAD(P)H-quinone oxidoreductase subunit I, chloroplastic.